The primary structure comprises 1366 residues: DNA-directed RNA polymerase subunit beta' (1366 aa).

Residues 1-20 show a composition bias toward basic residues; sequence MTSSKPKKTSRVRKTTKNSK. The disordered stretch occupies residues 1–37; it reads MTSSKPKKTSRVRKTTKNSKKNNPVTMPVLPKTPPSF. Residues Cys-248, Cys-315, Cys-322, and Cys-325 each coordinate Zn(2+). The segment at 1292–1366 is disordered; sequence TVDMPQSPAV…LQEEGLLSDE (75 aa). Residues 1354–1366 are compositionally biased toward low complexity; the sequence is LEGLQEEGLLSDE.

Belongs to the RNA polymerase beta' chain family. RpoC2 subfamily. As to quaternary structure, in cyanobacteria the RNAP catalytic core is composed of 2 alpha, 1 beta, 1 beta', 1 gamma and 1 omega subunit. When a sigma factor is associated with the core the holoenzyme is formed, which can initiate transcription. Zn(2+) serves as cofactor.

It catalyses the reaction RNA(n) + a ribonucleoside 5'-triphosphate = RNA(n+1) + diphosphate. In terms of biological role, DNA-dependent RNA polymerase catalyzes the transcription of DNA into RNA using the four ribonucleoside triphosphates as substrates. This chain is DNA-directed RNA polymerase subunit beta', found in Prochlorococcus marinus (strain MIT 9215).